A 341-amino-acid polypeptide reads, in one-letter code: Pyrophosphate--fructose 6-phosphate 1-phosphotransferase (341 aa).

Diphosphate is bound at residue Gly10. Position 103 (Glu103) interacts with Mg(2+). Residues 125 to 127, Arg162, 169 to 171, Glu221, Arg265, and 271 to 274 each bind substrate; these read TID, MGR, and HTQR. Residue Asp127 is the Proton acceptor of the active site.

This sequence belongs to the phosphofructokinase type A (PFKA) family. Mixed-substrate PFK group III subfamily. In terms of assembly, homotetramer. The cofactor is Mg(2+).

It localises to the cytoplasm. The enzyme catalyses beta-D-fructose 6-phosphate + diphosphate = beta-D-fructose 1,6-bisphosphate + phosphate + H(+). It participates in carbohydrate degradation; glycolysis; D-glyceraldehyde 3-phosphate and glycerone phosphate from D-glucose: step 3/4. Non-allosteric. Functionally, catalyzes the phosphorylation of D-fructose 6-phosphate, the first committing step of glycolysis. Uses inorganic phosphate (PPi) as phosphoryl donor instead of ATP like common ATP-dependent phosphofructokinases (ATP-PFKs), which renders the reaction reversible, and can thus function both in glycolysis and gluconeogenesis. Consistently, PPi-PFK can replace the enzymes of both the forward (ATP-PFK) and reverse (fructose-bisphosphatase (FBPase)) reactions. This chain is Pyrophosphate--fructose 6-phosphate 1-phosphotransferase, found in Amycolatopsis methanolica.